A 343-amino-acid chain; its full sequence is Lipase chaperone (343 aa).

The chain crosses the membrane as a helical span at residues 7-27; it reads IYLGIGLVALLMIFIYWLMPK.

This sequence belongs to the lipase chaperone family.

It localises to the cell inner membrane. May be involved in the folding of the extracellular lipase during its passage through the periplasm. The sequence is that of Lipase chaperone (lifO) from Acinetobacter baylyi (strain ATCC 33305 / BD413 / ADP1).